Consider the following 1059-residue polypeptide: Kinesin-like protein KIN-7K, chloroplastic (1059 aa).

Composition is skewed to low complexity over residues 1 to 35 (MSSRPSSSASSRRSSSPFSAGSRRPPTSSSSSAGS) and 43 to 58 (PRSYSTASSVSSSSHF). Residues 1 to 48 (MSSRPSSSASSRRSSSPFSAGSRRPPTSSSSSAGSYLTGRLMPRSYST) constitute a chloroplast transit peptide. A disordered region spans residues 1–99 (MSSRPSSSAS…SPPSPVPFPS (99 aa)). The span at 59–69 (FGGGGGSGGGS) shows a compositional bias: gly residues. Positions 70–87 (RSTTPGRRGSSSSSLVGP) are enriched in low complexity. Over residues 88-97 (VPSPPSPVPF) the composition is skewed to pro residues. The 318-residue stretch at 114–431 (SISVTIRFRP…LKFASRAKRV (318 aa)) folds into the Kinesin motor domain. Residue 194–201 (GVTSSGKT) participates in ATP binding. Positions 435–518 (AARNRMIDEK…IQRLTKLILV (84 aa)) form a coiled coil. The tract at residues 526–570 (ALTDTSSHQRHNSVNEEDKVSTSQDSSMLVQNDSATKDSLSSASP) is disordered. Residues 546 to 569 (STSQDSSMLVQNDSATKDSLSSAS) are compositionally biased toward polar residues. Coiled-coil stretches lie at residues 640–674 (EGTKNQIDNLEREIREKRRHMRALEQKLMESGEAS), 700–781 (ELEL…EENR), and 862–910 (LEDM…LEND). The RING-type zinc-finger motif lies at 1013–1048 (CKVCFESATAAVLLPCRHFCLCKPCSLACSECPLCR).

Belongs to the TRAFAC class myosin-kinesin ATPase superfamily. Kinesin family. KIN-7 subfamily.

The protein localises to the plastid. Its subcellular location is the chloroplast. This Oryza sativa subsp. japonica (Rice) protein is Kinesin-like protein KIN-7K, chloroplastic.